We begin with the raw amino-acid sequence, 449 residues long: Anthocyanidin 3-O-glucosyltransferase 1 (449 aa).

His3 serves as the catalytic Proton acceptor. Residue His3 participates in an anthocyanidin binding. The active-site Charge relay is Asp103. Positions 125, 325, 327, 342, 345, 346, 347, and 350 each coordinate UDP-alpha-D-glucose. An an anthocyanidin-binding site is contributed by Ala365. UDP-alpha-D-glucose contacts are provided by Glu366 and Gln367.

The protein belongs to the UDP-glycosyltransferase family. In terms of tissue distribution, expressed in cotyledons and roots, but not in leaves.

The enzyme catalyses an anthocyanidin + UDP-alpha-D-glucose + H(+) = an anthocyanidin 3-O-beta-D-glucoside + UDP. It participates in pigment biosynthesis; anthocyanin biosynthesis. Functionally, in the presence of other necessary color factors, this glycosylation reaction allows the accumulation of anthocyanin pigments. The protein is Anthocyanidin 3-O-glucosyltransferase 1 (GT1) of Manihot esculenta (Cassava).